A 406-amino-acid chain; its full sequence is Putative sodium-coupled neutral amino acid transporter 11 (406 aa).

Over 1-7 (MKQAGFP) the chain is Cytoplasmic. A helical transmembrane segment spans residues 8–28 (LGILLLFWVSYVTDFSLVLLI). Asn44 is a glycosylation site (N-linked (GlcNAc...) asparagine). Helical transmembrane passes span 48-68 (GFPG…IAMI), 93-113 (VFIG…LPLS), 121-141 (LGKV…IVMA), 156-176 (AWVF…FAFI), 202-222 (MSIV…YLTF), and 241-263 (VTFG…CFVT). Residue Asn275 is glycosylated (N-linked (GlcNAc...) asparagine). Helical transmembrane passes span 279–299 (VFHI…SLLI), 301–321 (CLGI…IFII), and 340–360 (IMSC…FVMA).

This sequence belongs to the amino acid/polyamine transporter 2 family.

The protein localises to the membrane. Putative sodium-dependent amino acid/proton antiporter. The chain is Putative sodium-coupled neutral amino acid transporter 11 (SLC38A11) from Homo sapiens (Human).